A 204-amino-acid chain; its full sequence is Large ribosomal subunit protein bL25 (204 aa).

The protein belongs to the bacterial ribosomal protein bL25 family. CTC subfamily. In terms of assembly, part of the 50S ribosomal subunit; part of the 5S rRNA/L5/L18/L25 subcomplex. Contacts the 5S rRNA. Binds to the 5S rRNA independently of L5 and L18.

In terms of biological role, this is one of the proteins that binds to the 5S RNA in the ribosome where it forms part of the central protuberance. This chain is Large ribosomal subunit protein bL25, found in Burkholderia pseudomallei (strain 668).